Here is a 454-residue protein sequence, read N- to C-terminus: Allantoinase (454 aa).

Positions 60, 62, 147, 183, 239, and 312 each coordinate Zn(2+). Lysine 147 bears the N6-carboxylysine mark.

The protein belongs to the metallo-dependent hydrolases superfamily. Allantoinase family. As to quaternary structure, homotetramer. The cofactor is Zn(2+). Post-translationally, carboxylation allows a single lysine to coordinate two zinc ions.

The catalysed reaction is (S)-allantoin + H2O = allantoate + H(+). The protein operates within nitrogen metabolism; (S)-allantoin degradation; allantoate from (S)-allantoin: step 1/1. Catalyzes the conversion of allantoin (5-ureidohydantoin) to allantoic acid by hydrolytic cleavage of the five-member hydantoin ring. The chain is Allantoinase from Bacillus velezensis (strain DSM 23117 / BGSC 10A6 / LMG 26770 / FZB42) (Bacillus amyloliquefaciens subsp. plantarum).